Consider the following 597-residue polypeptide: Lipoprotein LpqB (597 aa).

The first 28 residues, 1–28 (MTPGSRSAMRSRSVCGAIALAVLVTVSG), serve as a signal peptide directing secretion. Cys29 is lipidated: N-palmitoyl cysteine. Cys29 is lipidated: S-diacylglycerol cysteine. The segment covering 39 to 51 (QAIGTINRDSPGS) has biased composition (polar residues). Residues 39–59 (QAIGTINRDSPGSSVAAPAPG) are disordered.

The protein belongs to the LpqB lipoprotein family.

The protein localises to the cell membrane. The sequence is that of Lipoprotein LpqB from Rhodococcus opacus (strain B4).